The sequence spans 707 residues: Casein kinase 1-like protein HD16 (707 aa).

The interval 19–67 (YDVQDADPAASPVSPAPRGRTGRRGGAAAGRGNKTVAEGGGRKALKPRG) is disordered. Positions 24–37 (ADPAASPVSPAPRG) are enriched in low complexity. One can recognise a Protein kinase domain in the interval 147-425 (YITDRKLGKG…KLISLFDGLI (279 aa)). ATP is bound by residues 153-161 (LGKGGFGQV) and Lys184. The Proton acceptor role is filled by Asp276.

The protein belongs to the protein kinase superfamily. CK1 Ser/Thr protein kinase family. Casein kinase I subfamily. As to quaternary structure, monomer. Interacts with GHD7 (via C-terminus). Interacts with SLR1. Autophosphorylated. As to expression, expressed in roots, leaves and stems. Expressed in leaf vascular bundles, and proximal regions of the shoot and roots.

The protein localises to the cytoplasm. It is found in the nucleus. It carries out the reaction L-seryl-[protein] + ATP = O-phospho-L-seryl-[protein] + ADP + H(+). The enzyme catalyses L-threonyl-[protein] + ATP = O-phospho-L-threonyl-[protein] + ADP + H(+). In terms of biological role, casein kinases are operationally defined by their preferential utilization of acidic proteins such as caseins as substrates. It can phosphorylate a large number of proteins. Can phosphorylate casein on threonine residues in vitro. Involved in the regulation of flowering time through gibberellin (GA) signaling, and independently of photoperiod. Phosphorylates the DELLA protein SLR1, stabilizing SLR1 protein and sustaining SLR1 activity as repressor of GA signaling. Required for normal development of male floral organs and grains, through modulation of GA signaling. Targeted and repressed by the homeobox protein HAZ1 during GA signaling. Can phosphorylate phosvitin and SLR1 in vitro. Is not required for clock function in either the presence or the absence of light signals. Involved in a genetic control pathway for photoperiodic flowering under long day (LD) conditions that includes HD1, GHD7, HD5 and HD2. Phosphorylates and activates GHD7, a major floral repressor under LD conditions. Phosphorylation of GHD7 enhances its function in the repression of EHD1, HD3A and HD3B/RFT1, and obviously delaying flowering. This is Casein kinase 1-like protein HD16 from Oryza sativa subsp. japonica (Rice).